We begin with the raw amino-acid sequence, 251 residues long: Pyridoxine 5'-phosphate synthase (251 aa).

Position 7 (Asn-7) interacts with 3-amino-2-oxopropyl phosphate. 9–10 (DH) contacts 1-deoxy-D-xylulose 5-phosphate. Residue Arg-18 coordinates 3-amino-2-oxopropyl phosphate. Catalysis depends on His-43, which acts as the Proton acceptor. The 1-deoxy-D-xylulose 5-phosphate site is built by Arg-45 and His-50. Residue Glu-73 is the Proton acceptor of the active site. Residue Thr-103 coordinates 1-deoxy-D-xylulose 5-phosphate. His-197 functions as the Proton donor in the catalytic mechanism. 3-amino-2-oxopropyl phosphate contacts are provided by residues Gly-198 and 219 to 220 (GH).

Belongs to the PNP synthase family. As to quaternary structure, homooctamer; tetramer of dimers.

Its subcellular location is the cytoplasm. The enzyme catalyses 3-amino-2-oxopropyl phosphate + 1-deoxy-D-xylulose 5-phosphate = pyridoxine 5'-phosphate + phosphate + 2 H2O + H(+). It participates in cofactor biosynthesis; pyridoxine 5'-phosphate biosynthesis; pyridoxine 5'-phosphate from D-erythrose 4-phosphate: step 5/5. Its function is as follows. Catalyzes the complicated ring closure reaction between the two acyclic compounds 1-deoxy-D-xylulose-5-phosphate (DXP) and 3-amino-2-oxopropyl phosphate (1-amino-acetone-3-phosphate or AAP) to form pyridoxine 5'-phosphate (PNP) and inorganic phosphate. The sequence is that of Pyridoxine 5'-phosphate synthase from Caulobacter sp. (strain K31).